The sequence spans 133 residues: MSWQTYVDDHLMCDIEGTGQHLTAAAILGLDGTVWAKSDKFPEFKPEEMKGIINEFNEVGTLAPTGLFLGGAKYMVLQGEAGAVIRGKKGAGGICIKKTGQAMVMGIYDEPVAPGQCNMIVERLGDYLVDQNM.

The protein belongs to the profilin family. In terms of assembly, occurs in many kinds of cells as a complex with monomeric actin in a 1:1 ratio.

The protein resides in the cytoplasm. The protein localises to the cytoskeleton. Binds to actin and affects the structure of the cytoskeleton. At high concentrations, profilin prevents the polymerization of actin, whereas it enhances it at low concentrations. By binding to PIP2, it inhibits the formation of IP3 and DG. The sequence is that of Profilin-2 from Artemisia vulgaris (Mugwort).